A 616-amino-acid polypeptide reads, in one-letter code: MTSSQDACYISLLGLAEYFRTSSPPNIKKCIQCLQALFTFKPPLKVEARTHLQLGQILMAYTKNTELARNHLEQAWMLSENINNFDDVKFDTASLLAQLYQQQEQSSLAKPVLRKAIELSQHNVYWHCKLLFQLAQTHATDKEYALASELLAVGVESTDESNATYLKSLFLLSRAMIMMIERKSSDVLAILNQAGTIIDNAIQNIHLKEYLKVFFFVLQVCHYLQLGQVKTVKTSLKQLQQSIQTIMAPNWPSDEQIFGQNSTEMFMWLPKEQLYVLVYLVTVSHSMMAGYMDKAQKYTEKALTQIEKLKSQENKPILAVFQIILLEHIIMCRLVMGNKSLAIKEIALAKDVCLSSSHKFLLKKHSPQLHCLLGLYSMSASLFDHAERQFYTCIQETTERDLKLFANLNLAIVYLRMKREPDLRAILDQVQQENSLCSNSQALMGSFYYVQGLNAFHKSSFHEAKRFLRETLKMANAEDLNRLTSCSLVLLSHVFLSIGNSKESMNMVTPAMQLASKIPDIHVQLWGSAILKDLHRMLKEPALEQEAYNNHLNFSQNLIADQLKCTKFQEHTLINWIQGDPPMPMLTTQEPMMGEPSQAAAMRVAAGAPGQQVIFQ.

3 TPR repeats span residues 90-123 (FDTASLLAQLYQQQEQSSLAKPVLRKAIELSQHN), 445-478 (GSFYYVQGLNAFHKSSFHEAKRFLRETLKMANAE), and 485-518 (SCSLVLLSHVFLSIGNSKESMNMVTPAMQLASKI).

Belongs to the SCC4/mau-2 family. In terms of assembly, component of the cohesin loading complex.

Its subcellular location is the nucleus. The protein localises to the nucleoplasm. In terms of biological role, required for association of the cohesin complex with chromatin during interphase. Plays a role in sister chromatid cohesion and normal progression through prometaphase. In Culex quinquefasciatus (Southern house mosquito), this protein is MAU2 chromatid cohesion factor homolog.